We begin with the raw amino-acid sequence, 169 residues long: Cell division inhibitor SulA (169 aa).

Positions 106–112 are ftsZ binding; the sequence is ALRTGNY. Positions 162 to 169 are lon protease binding; the sequence is KIHSNLYH.

Belongs to the SulA family. Interacts with FtsZ. Post-translationally, is rapidly cleaved and degraded by the Lon protease once DNA damage is repaired.

Its function is as follows. Component of the SOS system and an inhibitor of cell division. Accumulation of SulA causes rapid cessation of cell division and the appearance of long, non-septate filaments. In the presence of GTP, binds a polymerization-competent form of FtsZ in a 1:1 ratio, thus inhibiting FtsZ polymerization and therefore preventing it from participating in the assembly of the Z ring. This mechanism prevents the premature segregation of damaged DNA to daughter cells during cell division. This is Cell division inhibitor SulA from Shigella flexneri serotype 5b (strain 8401).